Here is an 890-residue protein sequence, read N- to C-terminus: DNA mismatch repair protein MutS (890 aa).

607–614 (GPNMSGKS) is a binding site for ATP.

It belongs to the DNA mismatch repair MutS family.

This protein is involved in the repair of mismatches in DNA. It is possible that it carries out the mismatch recognition step. This protein has a weak ATPase activity. The protein is DNA mismatch repair protein MutS of Bacillus mycoides (strain KBAB4) (Bacillus weihenstephanensis).